We begin with the raw amino-acid sequence, 441 residues long: Ribosomal protein uS12 methylthiotransferase RimO (441 aa).

The region spanning 8 to 118 (PKIGFVSLGC…VLQHVHHYVP (111 aa)) is the MTTase N-terminal domain. [4Fe-4S] cluster contacts are provided by C17, C53, C82, C150, C154, and C157. The region spanning 136-373 (LTPRHYAYLK…MQLQQQISAE (238 aa)) is the Radical SAM core domain. In terms of domain architecture, TRAM spans 376-441 (QEKVGREILV…DEYDLWGSRV (66 aa)).

Belongs to the methylthiotransferase family. RimO subfamily. [4Fe-4S] cluster is required as a cofactor.

The protein resides in the cytoplasm. It carries out the reaction L-aspartate(89)-[ribosomal protein uS12]-hydrogen + (sulfur carrier)-SH + AH2 + 2 S-adenosyl-L-methionine = 3-methylsulfanyl-L-aspartate(89)-[ribosomal protein uS12]-hydrogen + (sulfur carrier)-H + 5'-deoxyadenosine + L-methionine + A + S-adenosyl-L-homocysteine + 2 H(+). Catalyzes the methylthiolation of an aspartic acid residue of ribosomal protein uS12. This is Ribosomal protein uS12 methylthiotransferase RimO from Salmonella agona (strain SL483).